We begin with the raw amino-acid sequence, 142 residues long: Ribonuclease VapC25 (142 aa).

The PINc domain maps to 3-139; sequence LIDVNVLLAA…ARFASVRHIR (137 aa). Residues aspartate 5 and aspartate 108 each coordinate Mg(2+).

Belongs to the PINc/VapC protein family. Mg(2+) is required as a cofactor.

Its function is as follows. Toxic component of a type II toxin-antitoxin (TA) system. An RNase. Upon expression in M.smegmatis inhibits colony formation. Its toxic effect is neutralized by coexpression with cognate antitoxin VapB25. This Mycobacterium tuberculosis (strain ATCC 25618 / H37Rv) protein is Ribonuclease VapC25.